The chain runs to 392 residues: Odorant receptor 9a (392 aa).

Over 1–41 the chain is Cytoplasmic; the sequence is MSDKVKGKKQEEKDQSLRVQILVYRCMGIDLWSPTMANDRP. Residues 42–62 traverse the membrane as a helical segment; that stretch reads WLTFVTMGPLFLFMVPMFLAA. Residues 63-74 are Extracellular-facing; it reads HEYITQVSLLSD. A helical membrane pass occupies residues 75-95; it reads TLGSTFASMLTLVKFLLFCYH. The Cytoplasmic segment spans residues 96 to 141; it reads RKEFVGLIYHIRAILAKEIEVWPDAREIIEVENQSDQMLSLTYTRC. A helical transmembrane segment spans residues 142–162; that stretch reads FGLAGIFAALKPFVGIILSSI. The Extracellular segment spans residues 163-202; sequence RGDEIHLELPHNGVYPYDLQVVMFYVPTYLWNVMASYSAV. Residues 203 to 223 form a helical membrane-spanning segment; sequence TMALCVDSLLFFFTYNVCAIF. Topologically, residues 224-268 are cytoplasmic; the sequence is KIAKHRMIHLPAVGGKEELEGLVQVLLLHQKGLQIADHIADKYRP. A helical transmembrane segment spans residues 269–289; that stretch reads LIFLQFFLSALQICFIGFQVA. The Extracellular portion of the chain corresponds to 290 to 297; that stretch reads DLFPNPQS. Residues 298–318 form a helical membrane-spanning segment; the sequence is LYFIAFVGSLLIALFIYSKCG. The Cytoplasmic portion of the chain corresponds to 319 to 362; that stretch reads ENIKSASLDFGNGLYETNWTDFSPPTKRALLIAAMRAQRPCQMK. A helical membrane pass occupies residues 363-383; the sequence is GYFFEASMATFSTIVRSAVSY. The Extracellular segment spans residues 384-392; the sequence is IMMLRSFNA.

This sequence belongs to the insect chemoreceptor superfamily. Heteromeric odorant receptor channel (TC 1.A.69) family. Or1a subfamily. In terms of assembly, interacts with Orco. Complexes exist early in the endomembrane system in olfactory sensory neurons (OSNs), coupling these complexes to the conserved ciliary trafficking pathway. As to expression, expressed in olfactory sensory neurons in the antenna.

The protein localises to the cell membrane. Its function is as follows. Odorant receptor which mediates acceptance or avoidance behavior, depending on its substrates. The odorant receptor repertoire encodes a large collection of odor stimuli that vary widely in identity, intensity, and duration. May form a complex with Orco to form odorant-sensing units, providing sensitive and prolonged odorant signaling and calcium permeability. The chain is Odorant receptor 9a (Or9a) from Drosophila melanogaster (Fruit fly).